Consider the following 89-residue polypeptide: Small ribosomal subunit protein uS15 (89 aa).

The protein belongs to the universal ribosomal protein uS15 family. Part of the 30S ribosomal subunit. Forms a bridge to the 50S subunit in the 70S ribosome, contacting the 23S rRNA.

Functionally, one of the primary rRNA binding proteins, it binds directly to 16S rRNA where it helps nucleate assembly of the platform of the 30S subunit by binding and bridging several RNA helices of the 16S rRNA. Its function is as follows. Forms an intersubunit bridge (bridge B4) with the 23S rRNA of the 50S subunit in the ribosome. This Paenarthrobacter aurescens (strain TC1) protein is Small ribosomal subunit protein uS15.